A 513-amino-acid chain; its full sequence is Histidine ammonia-lyase (513 aa).

A cross-link (5-imidazolinone (Ala-Gly)) is located at residues 144–146; the sequence is ASG. Residue Ser145 is modified to 2,3-didehydroalanine (Ser).

It belongs to the PAL/histidase family. Post-translationally, contains an active site 4-methylidene-imidazol-5-one (MIO), which is formed autocatalytically by cyclization and dehydration of residues Ala-Ser-Gly.

It localises to the cytoplasm. It carries out the reaction L-histidine = trans-urocanate + NH4(+). Its pathway is amino-acid degradation; L-histidine degradation into L-glutamate; N-formimidoyl-L-glutamate from L-histidine: step 1/3. The chain is Histidine ammonia-lyase from Streptococcus pyogenes serotype M6 (strain ATCC BAA-946 / MGAS10394).